The primary structure comprises 262 residues: Histone chaperone cia1 (262 aa).

The interval 157–262 (IQWDNPDFDD…KPEEKPETSQ (106 aa)) is disordered. Coiled-coil stretches lie at residues 173–196 (DADE…EGEG) and 223–253 (KGSE…AEEK). Composition is skewed to acidic residues over residues 173–219 (DADE…GEGE) and 226–242 (EEEE…EEES). Positions 250–262 (AEEKPEEKPETSQ) are enriched in basic and acidic residues.

This sequence belongs to the ASF1 family. In terms of assembly, interacts with histone H3 and histone H4.

Its subcellular location is the nucleus. Histone chaperone that facilitates histone deposition and histone exchange and removal during nucleosome assembly and disassembly. The protein is Histone chaperone cia1 (cia1) of Schizosaccharomyces pombe (strain 972 / ATCC 24843) (Fission yeast).